Consider the following 407-residue polypeptide: Argininosuccinate synthase (407 aa).

ATP is bound by residues 12–20 (AYSGGLDTS) and A39. L-citrulline contacts are provided by Y92 and S97. Residue G122 participates in ATP binding. Residues T124, N128, and D129 each coordinate L-aspartate. An L-citrulline-binding site is contributed by N128. Residues R132, S183, S192, E268, and Y280 each contribute to the L-citrulline site.

Belongs to the argininosuccinate synthase family. Type 1 subfamily. In terms of assembly, homotetramer.

The protein resides in the cytoplasm. It catalyses the reaction L-citrulline + L-aspartate + ATP = 2-(N(omega)-L-arginino)succinate + AMP + diphosphate + H(+). The protein operates within amino-acid biosynthesis; L-arginine biosynthesis; L-arginine from L-ornithine and carbamoyl phosphate: step 2/3. The chain is Argininosuccinate synthase from Caulobacter sp. (strain K31).